Here is a 116-residue protein sequence, read N- to C-terminus: Large ribosomal subunit protein uL18 (116 aa).

The protein belongs to the universal ribosomal protein uL18 family. In terms of assembly, part of the 50S ribosomal subunit; part of the 5S rRNA/L5/L18/L25 subcomplex. Contacts the 5S and 23S rRNAs.

Functionally, this is one of the proteins that bind and probably mediate the attachment of the 5S RNA into the large ribosomal subunit, where it forms part of the central protuberance. This chain is Large ribosomal subunit protein uL18, found in Pseudomonas fluorescens (strain SBW25).